A 131-amino-acid chain; its full sequence is Torsin-1A-interacting protein 2, isoform IFRG15 (131 aa).

This Mus musculus (Mouse) protein is Torsin-1A-interacting protein 2, isoform IFRG15 (Tor1aip2).